Here is a 615-residue protein sequence, read N- to C-terminus: Putative lipase ATG15 (615 aa).

The Cytoplasmic portion of the chain corresponds to 1 to 22 (MKQLGEEHPLISTKRPRAKKRR). A helical; Signal-anchor for type II membrane protein membrane pass occupies residues 23-43 (SIAICAAVLTLIAFGFIRFVP). Topologically, residues 44–615 (KDILAGGWYE…NSAAHHVSSI (572 aa)) are lumenal. N-linked (GlcNAc...) asparagine glycans are attached at residues N253, N276, and N360. The active-site Charge relay system is S378. Residues 520-559 (NKNDEPPLPNPLHPKPPSTVRSSNMPHEQSPNASRSLSSL) form a disordered region. Pro residues predominate over residues 525 to 536 (PPLPNPLHPKPP). A compositionally biased stretch (polar residues) spans 538-559 (TVRSSNMPHEQSPNASRSLSSL). N-linked (GlcNAc...) asparagine glycosylation is present at N551.

This sequence belongs to the AB hydrolase superfamily. Lipase family. In terms of assembly, binds to both phosphatidylinositol (PI) and phosphatidylinositol 3,5-bisphosphate (PIP2).

The protein localises to the endosome. Its subcellular location is the multivesicular body membrane. It is found in the prevacuolar compartment membrane. It catalyses the reaction a triacylglycerol + H2O = a diacylglycerol + a fatty acid + H(+). Its function is as follows. Lipase which is essential for lysis of subvacuolar cytoplasm to vacuole targeted bodies and intravacuolar autophagic bodies. Involved in the lysis of intravacuolar multivesicular body (MVB) vesicles. The intravacuolar membrane disintegration by ATG15 is critical to life span extension. The polypeptide is Putative lipase ATG15 (ATG15) (Debaryomyces hansenii (strain ATCC 36239 / CBS 767 / BCRC 21394 / JCM 1990 / NBRC 0083 / IGC 2968) (Yeast)).